Consider the following 218-residue polypeptide: Probable septum site-determining protein MinC (218 aa).

It belongs to the MinC family. In terms of assembly, interacts with MinD and FtsZ.

Functionally, cell division inhibitor that blocks the formation of polar Z ring septums. Rapidly oscillates between the poles of the cell to destabilize FtsZ filaments that have formed before they mature into polar Z rings. Prevents FtsZ polymerization. In Kosmotoga olearia (strain ATCC BAA-1733 / DSM 21960 / TBF 19.5.1), this protein is Probable septum site-determining protein MinC.